Here is a 224-residue protein sequence, read N- to C-terminus: Ribonuclease HII (224 aa).

Positions 21 to 223 (RAIAGIDEAG…IRNAALEGEQ (203 aa)) constitute an RNase H type-2 domain. Residues D27, E28, and D124 each coordinate a divalent metal cation.

The protein belongs to the RNase HII family. The cofactor is Mn(2+). It depends on Mg(2+) as a cofactor.

The protein resides in the cytoplasm. The catalysed reaction is Endonucleolytic cleavage to 5'-phosphomonoester.. Endonuclease that specifically degrades the RNA of RNA-DNA hybrids. The polypeptide is Ribonuclease HII (Roseiflexus castenholzii (strain DSM 13941 / HLO8)).